A 345-amino-acid polypeptide reads, in one-letter code: Glycerol-3-phosphate dehydrogenase [NAD(P)+] (345 aa).

Positions 23, 24, 44, and 118 each coordinate NADPH. Sn-glycerol 3-phosphate is bound by residues lysine 118, glycine 147, and threonine 149. Alanine 151 serves as a coordination point for NADPH. Residues lysine 203, aspartate 256, serine 266, arginine 267, and asparagine 268 each contribute to the sn-glycerol 3-phosphate site. Lysine 203 serves as the catalytic Proton acceptor. Arginine 267 is an NADPH binding site. Residues valine 291 and glutamate 293 each coordinate NADPH.

The protein belongs to the NAD-dependent glycerol-3-phosphate dehydrogenase family.

Its subcellular location is the cytoplasm. The enzyme catalyses sn-glycerol 3-phosphate + NAD(+) = dihydroxyacetone phosphate + NADH + H(+). It carries out the reaction sn-glycerol 3-phosphate + NADP(+) = dihydroxyacetone phosphate + NADPH + H(+). The protein operates within membrane lipid metabolism; glycerophospholipid metabolism. Catalyzes the reduction of the glycolytic intermediate dihydroxyacetone phosphate (DHAP) to sn-glycerol 3-phosphate (G3P), the key precursor for phospholipid synthesis. The sequence is that of Glycerol-3-phosphate dehydrogenase [NAD(P)+] from Vibrio parahaemolyticus serotype O3:K6 (strain RIMD 2210633).